Consider the following 190-residue polypeptide: Cytoplasmic envelopment protein 3 (190 aa).

Gly2 carries N-myristoyl glycine; by host lipidation. The disordered stretch occupies residues 27 to 190 (RQVSLRSYDN…TKKPAASLPF (164 aa)). Over residues 30 to 43 (SLRSYDNIPPTSSS) the composition is skewed to polar residues. A compositionally biased stretch (acidic residues) spans 44-58 (DEGEDDDDGEDDDNE). Positions 80 to 90 (SHREATHDGSK) are enriched in basic and acidic residues. Residues 108 to 123 (KQSKKKKKPSKHHHHQ) show a composition bias toward basic residues. A compositionally biased stretch (acidic residues) spans 130–139 (ETDDLDEEDT).

The protein belongs to the herpesviridae cytoplasmic envelopment protein 3 family. In terms of assembly, interacts with cytoplasmic envelopment protein 2; this interaction is essential for the proper localization of each protein to the assembly complex and thus for the production of infectious virus. In terms of processing, myristoylation and palmitoylation (probably on one or more of the nearby cysteines at the N-terminus) enable membrane-binding and Golgi apparatus-specific targeting and are essential for efficient packaging. Post-translationally, phosphorylated. Phosphorylation does not seem to be required for recycling to the host Golgi apparatus. Packaging is selective for underphosphorylated forms.

The protein resides in the virion tegument. Its subcellular location is the virion membrane. The protein localises to the host cell membrane. It localises to the host Golgi apparatus membrane. Its function is as follows. Plays an important role in the cytoplasmic envelopment of tegument proteins and capsids during the assembly and egress processes. Also participates in viral entry at the fusion step probably by regulating the core fusion machinery. The chain is Cytoplasmic envelopment protein 3 (UL99) from Human cytomegalovirus (strain AD169) (HHV-5).